Consider the following 1140-residue polypeptide: Eukaryotic translation initiation factor 3 subunit A (1140 aa).

Positions 319–502 (LQRMAAHVLL…HCIYFGTDLT (184 aa)) constitute a PCI domain. Basic and acidic residues-rich tracts occupy residues 590-624 (NNAR…EERE), 826-903 (RMAQ…RPEG), 925-965 (DRAD…KDNE), 1000-1019 (SRDD…DFRN), 1026-1053 (RGGD…EQQR), and 1061-1087 (DAPR…RDVR). 2 disordered regions span residues 590-632 (NNAR…QNEI) and 826-1140 (RMAQ…VKRR). A compositionally biased stretch (gly residues) spans 1091–1101 (PKEGGGGGGGN). Positions 1108 to 1130 (PRDEKPTTKQRDQPQDKENKAGD) are enriched in basic and acidic residues.

Belongs to the eIF-3 subunit A family. As to quaternary structure, component of the eukaryotic translation initiation factor 3 (eIF-3) complex. The eIF-3 complex interacts with pix.

It is found in the cytoplasm. Its function is as follows. RNA-binding component of the eukaryotic translation initiation factor 3 (eIF-3) complex, which is involved in protein synthesis of a specialized repertoire of mRNAs and, together with other initiation factors, stimulates binding of mRNA and methionyl-tRNAi to the 40S ribosome. The eIF-3 complex specifically targets and initiates translation of a subset of mRNAs involved in cell proliferation. The chain is Eukaryotic translation initiation factor 3 subunit A from Drosophila willistoni (Fruit fly).